We begin with the raw amino-acid sequence, 371 residues long: Peptide chain release factor 2 (371 aa).

Gln-251 carries the N5-methylglutamine modification.

It belongs to the prokaryotic/mitochondrial release factor family. In terms of processing, methylated by PrmC. Methylation increases the termination efficiency of RF2.

The protein resides in the cytoplasm. Peptide chain release factor 2 directs the termination of translation in response to the peptide chain termination codons UGA and UAA. This chain is Peptide chain release factor 2, found in Arthrobacter sp. (strain FB24).